The following is a 303-amino-acid chain: MHIYILGSAAGGGFPQWNCNCPNCHGVRTGTINAKVRTQSSIAISENGVDWILLNASPDIRQQLFDFKAAQPARKLRDTGITNVILMDSQLDHTTGLLTLREGCPMNVWCTEMVYQDLTTGFPVFNMLKHWNGGLQYHQIDPKQAFKINGFENLEFLPLIIQSAAPPYSPHRHDPHEGDNIALIIKDHKTQKQLFYAPGLGKIDDQIMQIMQDSDCVMIDGTLWTDDEMQQTGVGKKTGREMGHLYISGEGGSLSYLNQLSTPKKVLIHINNTNPILNENSAQFAELKANGVEVAFDGMQIEL.

It belongs to the PqqB family.

It participates in cofactor biosynthesis; pyrroloquinoline quinone biosynthesis. Functionally, may be involved in the transport of PQQ or its precursor to the periplasm. The polypeptide is Coenzyme PQQ synthesis protein B (Acinetobacter baumannii (strain ACICU)).